A 160-amino-acid polypeptide reads, in one-letter code: Cyclic pyranopterin monophosphate synthase (160 aa).

Substrate-binding positions include Met77–His79 and Met114–Glu115. The active site involves Asp129.

Belongs to the MoaC family. As to quaternary structure, homohexamer; trimer of dimers.

It carries out the reaction (8S)-3',8-cyclo-7,8-dihydroguanosine 5'-triphosphate = cyclic pyranopterin phosphate + diphosphate. Its pathway is cofactor biosynthesis; molybdopterin biosynthesis. Functionally, catalyzes the conversion of (8S)-3',8-cyclo-7,8-dihydroguanosine 5'-triphosphate to cyclic pyranopterin monophosphate (cPMP). The sequence is that of Cyclic pyranopterin monophosphate synthase from Listeria innocua serovar 6a (strain ATCC BAA-680 / CLIP 11262).